The primary structure comprises 367 residues: Probable butyrate kinase (367 aa).

It belongs to the acetokinase family.

It is found in the cytoplasm. It carries out the reaction butanoate + ATP = butanoyl phosphate + ADP. This Bacillus anthracis (strain A0248) protein is Probable butyrate kinase.